Reading from the N-terminus, the 290-residue chain is Cilia- and flagella-associated protein 298 (290 aa).

Tyr-264 carries the post-translational modification Phosphotyrosine.

It belongs to the CFAP298 family. In terms of assembly, interacts with ZMYND10.

Its subcellular location is the cytoplasm. It localises to the cytoskeleton. It is found in the cilium basal body. Plays a role in motile cilium function, possibly by acting on outer dynein arm assembly. Seems to be important for initiation rather than maintenance of cilium motility. Required for correct positioning of the cilium at the apical cell surface, suggesting an additional role in the planar cell polarity (PCP) pathway. May suppress canonical Wnt signaling activity. The sequence is that of Cilia- and flagella-associated protein 298 from Homo sapiens (Human).